The primary structure comprises 456 residues: Arginine biosynthesis bifunctional protein ArgJ, mitochondrial (456 aa).

Substrate-binding residues include T184, K213, T224, E311, N451, and T456. T224 serves as the catalytic Nucleophile.

The protein belongs to the ArgJ family. As to quaternary structure, heterodimer of an alpha and a beta chain. Post-translationally, the alpha and beta chains are autoproteolytically processed from a single precursor protein within the mitochondrion.

The protein localises to the mitochondrion matrix. It carries out the reaction N(2)-acetyl-L-ornithine + L-glutamate = N-acetyl-L-glutamate + L-ornithine. It catalyses the reaction L-glutamate + acetyl-CoA = N-acetyl-L-glutamate + CoA + H(+). It participates in amino-acid biosynthesis; L-arginine biosynthesis; L-ornithine and N-acetyl-L-glutamate from L-glutamate and N(2)-acetyl-L-ornithine (cyclic): step 1/1. It functions in the pathway amino-acid biosynthesis; L-arginine biosynthesis; N(2)-acetyl-L-ornithine from L-glutamate: step 1/4. Functionally, catalyzes two activities which are involved in the cyclic version of arginine biosynthesis: the synthesis of acetylglutamate from glutamate and acetyl-CoA, and of ornithine by transacetylation between acetylornithine and glutamate. This Aspergillus niger (strain ATCC MYA-4892 / CBS 513.88 / FGSC A1513) protein is Arginine biosynthesis bifunctional protein ArgJ, mitochondrial.